We begin with the raw amino-acid sequence, 367 residues long: Phosphoribosylaminoimidazole-succinocarboxamide synthase (367 aa).

Belongs to the SAICAR synthetase family.

The enzyme catalyses 5-amino-1-(5-phospho-D-ribosyl)imidazole-4-carboxylate + L-aspartate + ATP = (2S)-2-[5-amino-1-(5-phospho-beta-D-ribosyl)imidazole-4-carboxamido]succinate + ADP + phosphate + 2 H(+). It functions in the pathway purine metabolism; IMP biosynthesis via de novo pathway; 5-amino-1-(5-phospho-D-ribosyl)imidazole-4-carboxamide from 5-amino-1-(5-phospho-D-ribosyl)imidazole-4-carboxylate: step 1/2. In Aliivibrio fischeri (strain MJ11) (Vibrio fischeri), this protein is Phosphoribosylaminoimidazole-succinocarboxamide synthase.